Consider the following 879-residue polypeptide: Prostaglandin F2 receptor negative regulator (879 aa).

The first 21 residues, 1–21 (MGRPAPRPLLLALLSLAVCRG), serve as a signal peptide directing secretion. 2 consecutive Ig-like C2-type domains span residues 22-129 (RVVR…ATVQ) and 149-268 (PSSR…KAVE). Residues 22–832 (RVVRVPAGTL…MDVLNAFKYP (811 aa)) lie on the Extracellular side of the membrane. Cystine bridges form between C43–C119 and C169–C247. N44 carries an N-linked (GlcNAc...) asparagine glycan. Residues 89–91 (RGD) carry the Cell attachment site motif. T271 is modified (phosphothreonine). 4 Ig-like C2-type domains span residues 276-389 (PTAL…WHKV), 406-527 (PEYQ…RNSS), 544-662 (ASED…AWSP), and 688-813 (PIFN…AEIH). The cysteines at positions 299 and 373 are disulfide-linked. Residues N300, N383, and N413 are each glycosylated (N-linked (GlcNAc...) asparagine). The short motif at 424–427 (PTEL) is the Endoplasmic reticulum retention signal element. A disulfide bridge links C429 with C515. 4 N-linked (GlcNAc...) asparagine glycosylation sites follow: N525, N600, N618, and N691. Cysteines 571 and 655 form a disulfide. Positions 703–705 (RGD) match the Cell attachment site motif. C711 and C793 form a disulfide bridge. A helical transmembrane segment spans residues 833-853 (LLIGVGLSTVIGLLSCLIGYC). At 854–879 (SSHWCCKKEVRETRRERRRLMSMEMD) the chain is on the cytoplasmic side.

Interacts with CD9 and CD81. Part of a complex composed of CD9, CD81 and IGSF8. Also seems to interact with CD63, CD82 and CD151. Reproductive tissues, lung and heart.

The protein resides in the endoplasmic reticulum membrane. Its subcellular location is the golgi apparatus. The protein localises to the trans-Golgi network membrane. Inhibits the binding of prostaglandin F2-alpha (PGF2-alpha) to its specific FP receptor, by decreasing the receptor number rather than the affinity constant. Functional coupling with the prostaglandin F2-alpha receptor seems to occur. In myoblasts, associates with tetraspanins CD9 and CD81 to prevent myotube fusion during muscle regeneration. The polypeptide is Prostaglandin F2 receptor negative regulator (Ptgfrn) (Rattus norvegicus (Rat)).